The chain runs to 429 residues: MKTIDLFCGAGGLGEGFRQAGFSALYANDHETPALATYKENHPDAVCSTDSIETVDPKKIREDLGVAPGQVDVVMGGPPCQGFSTYGQRRDDDARNQLYVPYFGFVEEFRPKAFLIENVVGLLSMSGGAVLADMVARAEALGYAADVVTLDACEYGVPQHRRRVFIFGAADGQRIDPPQPSHVNGKRSGVVLNDQPSLFFDGPSIQPALTVRDAISDLPDEVLVPRDTQKPMEYPEPPKTEYQRLMRGNSTELTHHSAKRMLGIRRLRLAMLHPGDYGTKIEERLADGGLNDELIDLMMGGAGMRDAAECRTQDREKEAALREVLKGGHTTPAKVMEFLDSQGFANKYRRLRWDAPSHTVVAHMARDCSDFVHPGIDRFVSVREAARFQSFPDTYRFPGSQFRQFRQIGNAVPPLLGRAMAETIKVAIS.

Residues methionine 1 to serine 429 enclose the SAM-dependent MTase C5-type domain. Cysteine 80 is an active-site residue.

This sequence belongs to the class I-like SAM-binding methyltransferase superfamily. C5-methyltransferase family.

It carries out the reaction a 2'-deoxycytidine in DNA + S-adenosyl-L-methionine = a 5-methyl-2'-deoxycytidine in DNA + S-adenosyl-L-homocysteine + H(+). A methylase, recognizes the double-stranded sequence 5'-ACCGGT-3', methylates C-3 on both strands, and protects the DNA from cleavage by the AgeI endonuclease. The chain is Type II methyltransferase M.AgeI (ageIM) from Thalassovita gelatinovora (Thalassobius gelatinovorus).